Here is a 213-residue protein sequence, read N- to C-terminus: Urease accessory protein UreG (213 aa).

10–17 (GPVGSGKT) serves as a coordination point for GTP.

The protein belongs to the SIMIBI class G3E GTPase family. UreG subfamily. Homodimer. UreD, UreF and UreG form a complex that acts as a GTP-hydrolysis-dependent molecular chaperone, activating the urease apoprotein by helping to assemble the nickel containing metallocenter of UreC. The UreE protein probably delivers the nickel.

Its subcellular location is the cytoplasm. Facilitates the functional incorporation of the urease nickel metallocenter. This process requires GTP hydrolysis, probably effectuated by UreG. The protein is Urease accessory protein UreG of Deinococcus radiodurans (strain ATCC 13939 / DSM 20539 / JCM 16871 / CCUG 27074 / LMG 4051 / NBRC 15346 / NCIMB 9279 / VKM B-1422 / R1).